The sequence spans 124 residues: Tax1-binding protein 3 (124 aa).

An N-acetylserine modification is found at Ser2. One can recognise a PDZ domain in the interval 15 to 112 (RVEIHKLRQG…EVVRLLVTRQ (98 aa)). Residue Ser61 is modified to Phosphoserine.

As to quaternary structure, interacts (via its PDZ domain) with GLS2. Interacts (via its PDZ domain) with RTKN (via the C-terminal region); this interaction facilitates Rho-mediated activation of the FOS serum response element (SRE). Interacts (via its PDZ domain) with CTNNB1; this interaction inhibits the transcriptional activity of CTNNB1. Interacts with HTLV-1 TAX protein. Interacts (via PDZ domain) with ARHGEF16. Interacts (via PDZ domain) with KCNJ4 (via C-terminus). Competes with LIN7A for KCNJ4 binding. Interacts with ADGRB2. Ubiquitous. Detected in brain, heart, kidney, lung, small intestine and skeletal muscle. Detected in various cell lines including HeLa. Weakly expressed in peripheral blood leukocytes.

Its subcellular location is the cytoplasm. It is found in the nucleus. It localises to the cell membrane. May regulate a number of protein-protein interactions by competing for PDZ domain binding sites. Binds CTNNB1 and may thereby act as an inhibitor of the Wnt signaling pathway. Competes with LIN7A for KCNJ4 binding, and thereby promotes KCNJ4 internalization. May play a role in the Rho signaling pathway. May play a role in activation of CDC42 by the viral protein HPV16 E6. The polypeptide is Tax1-binding protein 3 (Homo sapiens (Human)).